We begin with the raw amino-acid sequence, 243 residues long: Eukaryotic translation initiation factor 4E-2 (243 aa).

The protein belongs to the eukaryotic initiation factor 4E family. As to quaternary structure, eIF4F is a multi-subunit complex, the composition of which varies with external and internal environmental conditions. It is composed of at least eIF4A, eIF4E and eIF4G. eIF4E is also known to interact with other partners.

Its function is as follows. Recognizes and binds the 7-methylguanosine-containing mRNA cap during an early step in the initiation of protein synthesis and facilitates ribosome binding by inducing the unwinding of the mRNAs secondary structures. The polypeptide is Eukaryotic translation initiation factor 4E-2 (tif452) (Schizosaccharomyces pombe (strain 972 / ATCC 24843) (Fission yeast)).